Here is a 426-residue protein sequence, read N- to C-terminus: 3-phosphoshikimate 1-carboxyvinyltransferase (426 aa).

Positions 22, 23, and 27 each coordinate 3-phosphoshikimate. K22 is a phosphoenolpyruvate binding site. Phosphoenolpyruvate is bound by residues G96 and R124. S170, S171, Q172, S198, D314, N337, and K341 together coordinate 3-phosphoshikimate. Q172 contacts phosphoenolpyruvate. D314 (proton acceptor) is an active-site residue. Residues R345, R387, and K412 each coordinate phosphoenolpyruvate.

The protein belongs to the EPSP synthase family. Monomer.

The protein localises to the cytoplasm. The catalysed reaction is 3-phosphoshikimate + phosphoenolpyruvate = 5-O-(1-carboxyvinyl)-3-phosphoshikimate + phosphate. The protein operates within metabolic intermediate biosynthesis; chorismate biosynthesis; chorismate from D-erythrose 4-phosphate and phosphoenolpyruvate: step 6/7. Functionally, catalyzes the transfer of the enolpyruvyl moiety of phosphoenolpyruvate (PEP) to the 5-hydroxyl of shikimate-3-phosphate (S3P) to produce enolpyruvyl shikimate-3-phosphate and inorganic phosphate. The chain is 3-phosphoshikimate 1-carboxyvinyltransferase from Aliivibrio fischeri (strain MJ11) (Vibrio fischeri).